A 392-amino-acid chain; its full sequence is uncharacterized protein (392 aa).

The protein belongs to the ROK (NagC/XylR) family.

This is an uncharacterized protein from Sinorhizobium fredii (strain NBRC 101917 / NGR234).